We begin with the raw amino-acid sequence, 272 residues long: Aquaporin FA-CHIP (272 aa).

Over 1 to 17 (MASEFKKKAFWRAVIAE) the chain is Cytoplasmic. A helical membrane pass occupies residues 18-35 (FLAMILFVFISIGAALGF). Topologically, residues 36–52 (NFPIEEKANQTVGRSQD) are extracellular. N-linked (GlcNAc...) asparagine glycosylation is present at Asn-44. The chain crosses the membrane as a helical span at residues 53 to 71 (IVKVSLAFGISIATMAQSV). At 72–97 (GHVSGAHLNPAVTLGCLLSCQISILK) the chain is on the cytoplasmic side. An NPA 1 motif is present at residues 80–82 (NPA). A helical membrane pass occupies residues 98–119 (AVMYIIAQCLGAVVATAILSGI). Topologically, residues 120–139 (TSGLENNSLGLNGLSPGVSA) are extracellular. Asn-125 carries an N-linked (GlcNAc...) asparagine glycan. The helical transmembrane segment at 140–160 (GQGLGVEILVTFQLVLCVVAV) threads the bilayer. At 161–168 (TDRRRHDV) the chain is on the cytoplasmic side. The chain crosses the membrane as a helical span at residues 169 to 188 (SGSVPLAIGLSVALGHLIAI). At 189–214 (DYTGCGMNPARSFGSAVLTKNFTYHW) the chain is on the extracellular side. Residues 196-198 (NPA) carry the NPA 2 motif. Asn-209 carries N-linked (GlcNAc...) asparagine glycosylation. The helical transmembrane segment at 215–236 (IFWVGPMIGGAAAAIIYDFILA) threads the bilayer. At 237–272 (PRTSDLTDRMKVWTNGQVEEYELDGDDNTRVEMKPK) the chain is on the cytoplasmic side.

It belongs to the MIP/aquaporin (TC 1.A.8) family.

It localises to the membrane. Forms a water-specific channel. The polypeptide is Aquaporin FA-CHIP (AQPA) (Pelophylax lessonae (Pool frog)).